The chain runs to 208 residues: V-type proton ATPase subunit E (208 aa).

The protein belongs to the V-ATPase E subunit family.

Functionally, produces ATP from ADP in the presence of a proton gradient across the membrane. In Chlamydia trachomatis serovar L2 (strain ATCC VR-902B / DSM 19102 / 434/Bu), this protein is V-type proton ATPase subunit E.